The sequence spans 456 residues: Chromosomal replication initiator protein DnaA 1 (456 aa).

Positions 1–68 (MRAWEEFLLL…KASLINNNGK (68 aa)) are domain I, interacts with DnaA modulators. The interval 68-101 (KPIRVRVTSLDKSTPFKETQIQQEKTAYFTMKYG) is domain II. The interval 102–320 (DIDPNMSFAN…HALTTLAKRV (219 aa)) is domain III, AAA+ region. Positions 150, 152, 153, and 154 each coordinate ATP. The interval 321 to 456 (AYKKLSHQML…AYQSLDFIED (136 aa)) is domain IV, binds dsDNA.

It belongs to the DnaA family. Oligomerizes as a right-handed, spiral filament on DNA at oriC.

The protein resides in the cytoplasm. Functionally, plays an essential role in the initiation and regulation of chromosomal replication. ATP-DnaA binds to the origin of replication (oriC) to initiate formation of the DNA replication initiation complex once per cell cycle. Binds the DnaA box (a 9 base pair repeat at the origin) and separates the double-stranded (ds)DNA. Forms a right-handed helical filament on oriC DNA; dsDNA binds to the exterior of the filament while single-stranded (ss)DNA is stabiized in the filament's interior. The ATP-DnaA-oriC complex binds and stabilizes one strand of the AT-rich DNA unwinding element (DUE), permitting loading of DNA polymerase. After initiation quickly degrades to an ADP-DnaA complex that is not apt for DNA replication. Binds acidic phospholipids. This Chlamydia trachomatis serovar D (strain ATCC VR-885 / DSM 19411 / UW-3/Cx) protein is Chromosomal replication initiator protein DnaA 1.